The following is a 99-amino-acid chain: Aspartyl/glutamyl-tRNA(Asn/Gln) amidotransferase subunit C (99 aa).

Belongs to the GatC family. Heterotrimer of A, B and C subunits.

It carries out the reaction L-glutamyl-tRNA(Gln) + L-glutamine + ATP + H2O = L-glutaminyl-tRNA(Gln) + L-glutamate + ADP + phosphate + H(+). The enzyme catalyses L-aspartyl-tRNA(Asn) + L-glutamine + ATP + H2O = L-asparaginyl-tRNA(Asn) + L-glutamate + ADP + phosphate + 2 H(+). In terms of biological role, allows the formation of correctly charged Asn-tRNA(Asn) or Gln-tRNA(Gln) through the transamidation of misacylated Asp-tRNA(Asn) or Glu-tRNA(Gln) in organisms which lack either or both of asparaginyl-tRNA or glutaminyl-tRNA synthetases. The reaction takes place in the presence of glutamine and ATP through an activated phospho-Asp-tRNA(Asn) or phospho-Glu-tRNA(Gln). The chain is Aspartyl/glutamyl-tRNA(Asn/Gln) amidotransferase subunit C from Delftia acidovorans (strain DSM 14801 / SPH-1).